Consider the following 486-residue polypeptide: MATFKDACYYYKRINKLNHTVLKLGVNDTWRPSPPTKYKGWCLDCCQHTDLTYCRGCTMYHVCQWCSQYGRCFLDNEPHLLRMRTFKNEVTKDDLMNLIDMYDTLFPMNQKIVDKFINNTRQHKCRNECMTQWYNHLLMPITLQSLSIELDGDIYYVFGYYDDMNNVNQTPFSFINLIDICDKLLLDDVNFTRMSFLPITLQQEYALRYFSKSRFISEQRKCVSDSHFSINVLENLHNPSFKIQITRNCSELSSDWNGACKLVKDTSAYFNILKTSHVEFYSVSTRCRMFTQRKLQIASKLMKPNYMTSNHRASATEVHNCKWCSTNSSYIVWNDFRVKKIYDNILNFLRALVKSNVNVGHCSSQEKIYECVENILDICDNEKWKTSVTEIFNCLEPVELNAVNYVLFNHEVNWDVINILVQSIGKVPQILTLNDVVTIMQSIIYEWFDIRYMRNTPMTTFTVDKLRRLCIEPKTVDYDSGISDVE.

The interval 1–81 is RNA-binding; sequence MATFKDACYY…CFLDNEPHLL (81 aa). The interval 42–79 is zinc-binding domain; the sequence is CLDCCQHTDLTYCRGCTMYHVCQWCSQYGRCFLDNEPH. The segment at 82-176 is important for cytoskeleton localization; that stretch reads RMRTFKNEVT…VNQTPFSFIN (95 aa). An interaction with host IRF3 region spans residues 317 to 486; that stretch reads EVHNCKWCST…DYDSGISDVE (170 aa). An IKBKB-like degron (ILD) motif motif is present at residues 479-483; that stretch reads DSGIS. Residues 480-483 carry the pLxIS motif motif; the sequence is SGIS.

This sequence belongs to the rotavirus NSP1 family. Interacts (via C-terminus) with host IRF3; this interaction leads to IRF3 degradation. Interacts with host IRF7; this interaction leads to IRF7 degradation. Interacts with host CUL1 and CUL3. Interacts with host BTRC. Post-translationally, the C-terminal region is phosphorylated by host CKII/CSNK2A1. Phosphorylation of the DSGXS motif is essential for host NF-kappa-B inhibition.

The protein localises to the host cytoplasm. It is found in the host cytoskeleton. Plays a role in the inhibition of host innate immunity by inducing the degradation of key host factors required to activate interferon production such as IRF3, IRF5 or IRF7. Associates with components of cullin RING ligases (CRLs) including CUL1 or CUL3, which are essential multisubunit ubiquitination complexes, to modulate their activities. Recognizes the host NF-kappa-B regulator BTRC through the presence of a DSGXS motif in the C-terminal substrate recognition domain. This is Non-structural protein 1 from Homo sapiens (Human).